The chain runs to 294 residues: F-box protein SKIP3 (294 aa).

The F-box domain maps to 21-67 (SSTLDSLPEGCISNIISFTSPEDACVAAAVSKIFESAVKSDIVWEKF).

Part of a SCF (SKP1-cullin-F-box) protein ligase complex. Interacts with SKP1A/ASK1.

The protein operates within protein modification; protein ubiquitination. In Arabidopsis thaliana (Mouse-ear cress), this protein is F-box protein SKIP3 (SKIP3).